Reading from the N-terminus, the 355-residue chain is Heat-inducible transcription repressor HrcA (355 aa).

The protein belongs to the HrcA family.

Its function is as follows. Negative regulator of class I heat shock genes (grpE-dnaK-dnaJ and groELS operons). Prevents heat-shock induction of these operons. This Nitratidesulfovibrio vulgaris (strain ATCC 29579 / DSM 644 / CCUG 34227 / NCIMB 8303 / VKM B-1760 / Hildenborough) (Desulfovibrio vulgaris) protein is Heat-inducible transcription repressor HrcA.